The following is a 363-amino-acid chain: S-adenosylmethionine:tRNA ribosyltransferase-isomerase (363 aa).

The protein belongs to the QueA family. In terms of assembly, monomer.

It is found in the cytoplasm. The catalysed reaction is 7-aminomethyl-7-carbaguanosine(34) in tRNA + S-adenosyl-L-methionine = epoxyqueuosine(34) in tRNA + adenine + L-methionine + 2 H(+). The protein operates within tRNA modification; tRNA-queuosine biosynthesis. In terms of biological role, transfers and isomerizes the ribose moiety from AdoMet to the 7-aminomethyl group of 7-deazaguanine (preQ1-tRNA) to give epoxyqueuosine (oQ-tRNA). The chain is S-adenosylmethionine:tRNA ribosyltransferase-isomerase from Haemophilus influenzae (strain ATCC 51907 / DSM 11121 / KW20 / Rd).